The chain runs to 452 residues: Glycine receptor subunit alpha-2 (452 aa).

The N-terminal stretch at 1–27 (MYRQLVNILTALFAFFLGTNHFREAFC) is a signal peptide. Residues 28–256 (KDHDSRSGKH…KFHLERQMGY (229 aa)) lie on the Extracellular side of the membrane. Residue asparagine 72 is glycosylated (N-linked (GlcNAc...) asparagine). Arginine 99 provides a ligand contact to glycine. Arginine 99 contributes to the strychnine binding site. N-linked (GlcNAc...) asparagine glycosylation occurs at asparagine 103. Serine 163 serves as a coordination point for glycine. An intrachain disulfide couples cysteine 172 to cysteine 186. Zn(2+) contacts are provided by glutamate 226 and glutamate 228. Residues cysteine 232 and cysteine 243 are joined by a disulfide bond. Residue threonine 238 participates in glycine binding. Histidine 249 provides a ligand contact to Zn(2+). The chain crosses the membrane as a helical span at residues 257–278 (YLIQMYIPSLLIVILSWVSFWI). At 279-283 (NMDAA) the chain is on the cytoplasmic side. The helical transmembrane segment at 284 to 304 (PARVALGITTVLTMTTQSSGS) threads the bilayer. Residues 305–315 (RASLPKVSYVK) are Extracellular-facing. Residues 316–336 (AIDIWMAVCLLFVFAALLEYA) form a helical membrane-spanning segment. At 337–420 (AVNFVSRQHK…FVDRAKRIDT (84 aa)) the chain is on the cytoplasmic side. The chain crosses the membrane as a helical span at residues 421 to 441 (ISRAAFPLAFLIFNIFYWITY). The Extracellular segment spans residues 442–452 (KIIRHEDVHKK).

Belongs to the ligand-gated ion channel (TC 1.A.9) family. Glycine receptor (TC 1.A.9.3) subfamily. GLRA2 sub-subfamily. Interacts with GLRB. Heteropentamer composed of GLRA2 and GLRB; functional GLRB-GLRA2 heteropentamers contain four GLRA2 subunits and one GLRB subunit, although alternative subunit composition cannot be excluded. Homopentamer (in vitro). Both homopentamers and heteropentamers form functional ion channels, but their characteristics are subtly different. As to expression, detected in the retina inner plexiform layer (at protein level). Detected in neonate retina. Detected in brain. Detected in spinal cord, with higher levels in the dorsal horn.

The protein resides in the postsynaptic cell membrane. Its subcellular location is the synapse. It localises to the cell membrane. The protein localises to the cell projection. It catalyses the reaction chloride(in) = chloride(out). Channel opening is triggered by extracellular glycine. Channel opening is also triggered by taurine and beta-alanine. Inhibited by strychnine. Inhibited by picrotoxin. Its function is as follows. Subunit of heteromeric glycine-gated chloride channels. Plays a role in synaptic plasticity. Contributes to the generation of inhibitory postsynaptic currents, and is involved in the down-regulation of neuronal excitability. Plays a role in cellular responses to ethanol. This chain is Glycine receptor subunit alpha-2, found in Mus musculus (Mouse).